The primary structure comprises 607 residues: CUB and zona pellucida-like domain-containing protein 1 (607 aa).

Positions 1–24 are cleaved as a signal peptide; that stretch reads MELVRRLMPLTLLILSCLAELTMA. The cysteines at positions 17 and 58 are disulfide-linked. CUB domains follow at residues 25–146 and 154–265; these read EAEG…YFFS and CGGY…YTSI. The Lumenal segment spans residues 25–568; sequence EAEGNASCTV…EETPNQPFNS (544 aa). Residues Asn29, Asn57, and Asn67 are each glycosylated (N-linked (GlcNAc...) asparagine). Intrachain disulfides connect Cys85–Cys107, Cys154–Cys180, and Cys207–Cys229. A ZP domain is found at 276–519; the sequence is TCSSDRMRVI…SRCNQGCVSR (244 aa). 2 N-linked (GlcNAc...) asparagine glycosylation sites follow: Asn394 and Asn419. Cys442 and Cys498 form a disulfide bridge. Residues 569–589 traverse the membrane as a helical segment; the sequence is VHLFSFMVLALNVVTVATITV. Over 590–607 the chain is Cytoplasmic; the sequence is RHFVNQRADYKYQKLQNY.

Detected in pancreas and epithelium of ovary. Expressed at higher levels in ovarian tumors than in normal tissue.

Its subcellular location is the zymogen granule membrane. Functionally, localized to zymogen granules, where it functions in trypsinogen activation. May indirectly regulate cell motility, cell-cell and cell/extracellular matrix interactions. This chain is CUB and zona pellucida-like domain-containing protein 1, found in Homo sapiens (Human).